The primary structure comprises 616 residues: Chaperone protein HtpG (616 aa).

The segment at 1-333 is a; substrate-binding; that stretch reads MKKQFDTEVN…CQDLPLNVSR (333 aa). The tract at residues 334–542 is b; the sequence is EILQQNKILS…SNDPTYQMQK (209 aa). Positions 543–616 are c; the sequence is IMLSMGQEVK…INEFLEKDLL (74 aa).

This sequence belongs to the heat shock protein 90 family. Homodimer.

The protein localises to the cytoplasm. Its function is as follows. Molecular chaperone. Has ATPase activity. The polypeptide is Chaperone protein HtpG (Borreliella afzelii (strain PKo) (Borrelia afzelii)).